Reading from the N-terminus, the 227-residue chain is Large ribosomal subunit protein uL3 (227 aa).

Gln-151 is modified (N5-methylglutamine).

It belongs to the universal ribosomal protein uL3 family. As to quaternary structure, part of the 50S ribosomal subunit. Forms a cluster with proteins L14 and L19. In terms of processing, methylated by PrmB.

Its function is as follows. One of the primary rRNA binding proteins, it binds directly near the 3'-end of the 23S rRNA, where it nucleates assembly of the 50S subunit. This Gluconobacter oxydans (strain 621H) (Gluconobacter suboxydans) protein is Large ribosomal subunit protein uL3.